Here is a 220-residue protein sequence, read N- to C-terminus: GTP cyclohydrolase 1 (220 aa).

Residues Cys-113, His-116, and Cys-184 each contribute to the Zn(2+) site.

It belongs to the GTP cyclohydrolase I family. In terms of assembly, homomer.

The enzyme catalyses GTP + H2O = 7,8-dihydroneopterin 3'-triphosphate + formate + H(+). It functions in the pathway cofactor biosynthesis; 7,8-dihydroneopterin triphosphate biosynthesis; 7,8-dihydroneopterin triphosphate from GTP: step 1/1. The polypeptide is GTP cyclohydrolase 1 (Hamiltonella defensa subsp. Acyrthosiphon pisum (strain 5AT)).